The following is a 1518-amino-acid chain: Putative cellulose synthase 3 (1518 aa).

The segment at 1–731 (MYGTWFTTGK…EEKLEKQSFV (731 aa)) is catalytic. 3 helical membrane-spanning segments follow: residues 24–44 (PVWV…SVRI), 71–91 (ITVF…VWRL), and 105–125 (LAVL…LSYF). Residues 144-237 (QWPSVDVFVP…FAVIFDCDHV (94 aa)) are catalytic subdomain A. Catalysis depends on residues Asp-186 and Asp-330. The tract at residues 314–374 (EAVMGIGGFA…GQRVRWARGM (61 aa)) is catalytic subdomain B. Helical transmembrane passes span 404–424 (FLFA…LFLG), 428–448 (IAAS…HSVI), 465–485 (IYET…LLQP), 514–534 (ILAG…VWQF), and 543–563 (FILN…SIAV). Residues 569–668 (QTRNAPRVSV…ERQVVSMVFG (100 aa)) form the PilZ domain. The cyclic di-GMP binding domain stretch occupies residues 732-1518 (LKPVPRSARH…IARDDLTGEL (787 aa)). Residues 765–785 (APSPDQSGVTAETPFGDSNTG) are disordered. A compositionally biased stretch (polar residues) spans 768–785 (PDQSGVTAETPFGDSNTG). Residues 1481 to 1501 (ALYLAGLAGAGLAALGVWAWL) traverse the membrane as a helical segment.

In the N-terminal section; belongs to the glycosyltransferase 2 family. It in the C-terminal section; belongs to the AcsB/BcsB family.

It localises to the cell inner membrane. It carries out the reaction [(1-&gt;4)-beta-D-glucosyl](n) + UDP-alpha-D-glucose = [(1-&gt;4)-beta-D-glucosyl](n+1) + UDP + H(+). Its pathway is glycan metabolism; bacterial cellulose biosynthesis. This chain is Putative cellulose synthase 3 (bcsABII-B), found in Komagataeibacter xylinus (Gluconacetobacter xylinus).